A 262-amino-acid polypeptide reads, in one-letter code: Polyamine aminopropyltransferase (262 aa).

A PABS domain is found at 1–249; sequence MWITQEITPY…DIHRAAFALP (249 aa). S-methyl-5'-thioadenosine is bound at residue Asn29. Asp83 provides a ligand contact to spermidine. Asp155 functions as the Proton acceptor in the catalytic mechanism.

Belongs to the spermidine/spermine synthase family. Homodimer or homotetramer.

Its subcellular location is the cytoplasm. It carries out the reaction S-adenosyl 3-(methylsulfanyl)propylamine + putrescine = S-methyl-5'-thioadenosine + spermidine + H(+). It functions in the pathway amine and polyamine biosynthesis; spermidine biosynthesis; spermidine from putrescine: step 1/1. Its function is as follows. Catalyzes the irreversible transfer of a propylamine group from the amino donor S-adenosylmethioninamine (decarboxy-AdoMet) to putrescine (1,4-diaminobutane) to yield spermidine. This Helicobacter pylori (strain P12) protein is Polyamine aminopropyltransferase.